We begin with the raw amino-acid sequence, 63 residues long: MEKSQSSCDTRKRSVVVDVDNTKDRISDLPNRILGKIIVKLPLDEAVRIMALSKRWKSIWDDN.

In terms of domain architecture, F-box spans 23-63; the sequence is KDRISDLPNRILGKIIVKLPLDEAVRIMALSKRWKSIWDDN.

The protein is Putative F-box protein At1g47702 of Arabidopsis thaliana (Mouse-ear cress).